The chain runs to 76 residues: Exodeoxyribonuclease 7 small subunit (76 aa).

Belongs to the XseB family. In terms of assembly, heterooligomer composed of large and small subunits.

Its subcellular location is the cytoplasm. It catalyses the reaction Exonucleolytic cleavage in either 5'- to 3'- or 3'- to 5'-direction to yield nucleoside 5'-phosphates.. Its function is as follows. Bidirectionally degrades single-stranded DNA into large acid-insoluble oligonucleotides, which are then degraded further into small acid-soluble oligonucleotides. The protein is Exodeoxyribonuclease 7 small subunit of Geobacillus thermodenitrificans (strain NG80-2).